A 134-amino-acid polypeptide reads, in one-letter code: Small ribosomal subunit protein uS11 (134 aa).

This sequence belongs to the universal ribosomal protein uS11 family. Part of the 30S ribosomal subunit. Interacts with proteins S7 and S18. Binds to IF-3.

In terms of biological role, located on the platform of the 30S subunit, it bridges several disparate RNA helices of the 16S rRNA. Forms part of the Shine-Dalgarno cleft in the 70S ribosome. The polypeptide is Small ribosomal subunit protein uS11 (Herminiimonas arsenicoxydans).